A 363-amino-acid chain; its full sequence is Ribosomal RNA large subunit methyltransferase M (363 aa).

S-adenosyl-L-methionine-binding positions include S194, 227 to 230, D246, D266, and D284; that span reads CPGG. The active-site Proton acceptor is K313.

This sequence belongs to the class I-like SAM-binding methyltransferase superfamily. RNA methyltransferase RlmE family. RlmM subfamily. As to quaternary structure, monomer.

It localises to the cytoplasm. The enzyme catalyses cytidine(2498) in 23S rRNA + S-adenosyl-L-methionine = 2'-O-methylcytidine(2498) in 23S rRNA + S-adenosyl-L-homocysteine + H(+). In terms of biological role, catalyzes the 2'-O-methylation at nucleotide C2498 in 23S rRNA. The sequence is that of Ribosomal RNA large subunit methyltransferase M from Mannheimia succiniciproducens (strain KCTC 0769BP / MBEL55E).